A 229-amino-acid polypeptide reads, in one-letter code: Peptidase E (229 aa).

Residues Ser120, Asp135, and His157 each act as charge relay system in the active site.

The protein belongs to the peptidase S51 family.

Its subcellular location is the cytoplasm. The enzyme catalyses Dipeptidase E catalyzes the hydrolysis of dipeptides Asp-|-Xaa. It does not act on peptides with N-terminal Glu, Asn or Gln, nor does it cleave isoaspartyl peptides.. Functionally, hydrolyzes dipeptides containing N-terminal aspartate residues. May play a role in allowing the cell to use peptide aspartate to spare carbon otherwise required for the synthesis of the aspartate family of amino acids. The chain is Peptidase E from Salmonella schwarzengrund (strain CVM19633).